Here is a 142-residue protein sequence, read N- to C-terminus: Heat shock protein HSP.16.4 (142 aa).

In terms of domain architecture, sHSP spans 27–142; the sequence is NLFNDLKSNL…KEIKTSIPIE (116 aa).

The protein belongs to the small heat shock protein (HSP20) family.

It localises to the cytoplasm. This Streptococcus thermophilus protein is Heat shock protein HSP.16.4.